Reading from the N-terminus, the 429-residue chain is Ribosomal RNA small subunit methyltransferase B (429 aa).

Residues 254–260 (CAAPGGK), aspartate 277, aspartate 303, and aspartate 322 contribute to the S-adenosyl-L-methionine site. The active-site Nucleophile is the cysteine 375.

Belongs to the class I-like SAM-binding methyltransferase superfamily. RsmB/NOP family.

It is found in the cytoplasm. It carries out the reaction cytidine(967) in 16S rRNA + S-adenosyl-L-methionine = 5-methylcytidine(967) in 16S rRNA + S-adenosyl-L-homocysteine + H(+). Functionally, specifically methylates the cytosine at position 967 (m5C967) of 16S rRNA. The chain is Ribosomal RNA small subunit methyltransferase B from Photorhabdus laumondii subsp. laumondii (strain DSM 15139 / CIP 105565 / TT01) (Photorhabdus luminescens subsp. laumondii).